Reading from the N-terminus, the 195-residue chain is UPF0215 protein TGAM_0348 (195 aa).

The protein belongs to the UPF0215 family.

The sequence is that of UPF0215 protein TGAM_0348 from Thermococcus gammatolerans (strain DSM 15229 / JCM 11827 / EJ3).